The following is a 180-amino-acid chain: ATP synthase subunit delta, chloroplastic (180 aa).

The protein belongs to the ATPase delta chain family. In terms of assembly, F-type ATPases have 2 components, F(1) - the catalytic core - and F(0) - the membrane proton channel. F(1) has five subunits: alpha(3), beta(3), gamma(1), delta(1), epsilon(1). CF(0) has four main subunits: a(1), b(1), b'(1) and c(10-14). The alpha and beta chains form an alternating ring which encloses part of the gamma chain. F(1) is attached to F(0) by a central stalk formed by the gamma and epsilon chains, while a peripheral stalk is formed by the delta, b and b' chains.

The protein localises to the plastid. It localises to the chloroplast thylakoid membrane. Its function is as follows. F(1)F(0) ATP synthase produces ATP from ADP in the presence of a proton or sodium gradient. F-type ATPases consist of two structural domains, F(1) containing the extramembraneous catalytic core and F(0) containing the membrane proton channel, linked together by a central stalk and a peripheral stalk. During catalysis, ATP synthesis in the catalytic domain of F(1) is coupled via a rotary mechanism of the central stalk subunits to proton translocation. In terms of biological role, this protein is part of the stalk that links CF(0) to CF(1). It either transmits conformational changes from CF(0) to CF(1) or is implicated in proton conduction. The sequence is that of ATP synthase subunit delta, chloroplastic from Emiliania huxleyi (Coccolithophore).